A 184-amino-acid polypeptide reads, in one-letter code: Photosystem I assembly protein Ycf4 (184 aa).

2 helical membrane-spanning segments follow: residues 22-42 and 57-77; these read FGWA…GASS and IVFF…LFIS.

Belongs to the Ycf4 family.

The protein localises to the plastid. It is found in the chloroplast thylakoid membrane. In terms of biological role, seems to be required for the assembly of the photosystem I complex. This chain is Photosystem I assembly protein Ycf4, found in Acorus calamus (Sweet flag).